A 194-amino-acid polypeptide reads, in one-letter code: Dephospho-CoA kinase (194 aa).

The DPCK domain maps to 4–194 (ALGLTGSIGM…HLVSKLTEGT (191 aa)). Position 12–17 (12–17 (GMGKST)) interacts with ATP.

It belongs to the CoaE family.

The protein resides in the cytoplasm. The enzyme catalyses 3'-dephospho-CoA + ATP = ADP + CoA + H(+). The protein operates within cofactor biosynthesis; coenzyme A biosynthesis; CoA from (R)-pantothenate: step 5/5. Catalyzes the phosphorylation of the 3'-hydroxyl group of dephosphocoenzyme A to form coenzyme A. This chain is Dephospho-CoA kinase, found in Jannaschia sp. (strain CCS1).